The chain runs to 316 residues: 4-hydroxy-3-methylbut-2-enyl diphosphate reductase (316 aa).

Cys12 is a binding site for [4Fe-4S] cluster. (2E)-4-hydroxy-3-methylbut-2-enyl diphosphate contacts are provided by His41 and His74. The dimethylallyl diphosphate site is built by His41 and His74. Isopentenyl diphosphate-binding residues include His41 and His74. Residue Cys96 participates in [4Fe-4S] cluster binding. His124 serves as a coordination point for (2E)-4-hydroxy-3-methylbut-2-enyl diphosphate. His124 provides a ligand contact to dimethylallyl diphosphate. Residue His124 coordinates isopentenyl diphosphate. The Proton donor role is filled by Glu126. Thr167 contributes to the (2E)-4-hydroxy-3-methylbut-2-enyl diphosphate binding site. Cys197 lines the [4Fe-4S] cluster pocket. The (2E)-4-hydroxy-3-methylbut-2-enyl diphosphate site is built by Ser225, Ser226, Asn227, and Ser269. 4 residues coordinate dimethylallyl diphosphate: Ser225, Ser226, Asn227, and Ser269. The isopentenyl diphosphate site is built by Ser225, Ser226, Asn227, and Ser269.

Belongs to the IspH family. In terms of assembly, homodimer. Requires [4Fe-4S] cluster as cofactor.

It carries out the reaction isopentenyl diphosphate + 2 oxidized [2Fe-2S]-[ferredoxin] + H2O = (2E)-4-hydroxy-3-methylbut-2-enyl diphosphate + 2 reduced [2Fe-2S]-[ferredoxin] + 2 H(+). The catalysed reaction is dimethylallyl diphosphate + 2 oxidized [2Fe-2S]-[ferredoxin] + H2O = (2E)-4-hydroxy-3-methylbut-2-enyl diphosphate + 2 reduced [2Fe-2S]-[ferredoxin] + 2 H(+). Its pathway is isoprenoid biosynthesis; dimethylallyl diphosphate biosynthesis; dimethylallyl diphosphate from (2E)-4-hydroxy-3-methylbutenyl diphosphate: step 1/1. It participates in isoprenoid biosynthesis; isopentenyl diphosphate biosynthesis via DXP pathway; isopentenyl diphosphate from 1-deoxy-D-xylulose 5-phosphate: step 6/6. Functionally, catalyzes the conversion of 1-hydroxy-2-methyl-2-(E)-butenyl 4-diphosphate (HMBPP) into a mixture of isopentenyl diphosphate (IPP) and dimethylallyl diphosphate (DMAPP). Acts in the terminal step of the DOXP/MEP pathway for isoprenoid precursor biosynthesis. The sequence is that of 4-hydroxy-3-methylbut-2-enyl diphosphate reductase from Cronobacter sakazakii (strain ATCC BAA-894) (Enterobacter sakazakii).